The following is a 265-amino-acid chain: Cell division protein DivIB (265 aa).

The Cytoplasmic segment spans residues 1–33 (MRMELKMMGNVNKSNKTNEYILRRHKKKRKKKL). Residues 34-54 (IIFSILLISILVTLCFKHPFF) traverse the membrane as a helical segment. The POTRA domain occupies 54 to 122 (FNVKIVEVKD…NKIVIHIKER (69 aa)). Topologically, residues 55 to 265 (NVKIVEVKDN…FKGNPVVFIK (211 aa)) are extracellular.

It belongs to the FtsQ/DivIB family. DivIB subfamily.

It localises to the cell membrane. In terms of biological role, cell division protein that may be involved in stabilizing or promoting the assembly of the division complex. This chain is Cell division protein DivIB, found in Clostridium tetani (strain Massachusetts / E88).